Here is a 1140-residue protein sequence, read N- to C-terminus: DNA damage-binding protein 1 (1140 aa).

Residues 13–356 (TAVNGCVTGH…VVAMETFTNL (344 aa)) are WD repeat beta-propeller A. Residues 391–708 (RNGIGIHEHA…LTIGTIDEIQ (318 aa)) are WD repeat beta-propeller B; Interaction with CUL4A. Positions 709–1043 (KLHIRTVPLY…NGMIGLVTSL (335 aa)) are WD repeat beta-propeller C.

It belongs to the DDB1 family. As to quaternary structure, component of the UV-DDB complex which includes DDB1 and DDB2. Component of numerous DCX (DDB1-CUL4-X-box) E3 ubiquitin-protein ligase complexes which consist of a core of DDB1, CUL4A or CUL4B and RBX1, and a substrate receptor, such as CRBN. DDB1 may recruit specific substrate targeting subunits to the DCX complex. These substrate targeting subunits are generally known as DCAF (DDB1- and CUL4-associated factor) or CDW (CUL4-DDB1-associated WD40-repeat) proteins.

Its subcellular location is the cytoplasm. The protein localises to the nucleus. The protein operates within protein modification; protein ubiquitination. Functionally, protein, which is both involved in DNA repair and protein ubiquitination, as part of the UV-DDB complex and DCX (DDB1-CUL4-X-box) complexes, respectively. Core component of the UV-DDB complex (UV-damaged DNA-binding protein complex), a complex that recognizes UV-induced DNA damage and recruit proteins of the nucleotide excision repair pathway (the NER pathway) to initiate DNA repair. The UV-DDB complex may recognize UV-induced DNA damage and recruit proteins of the nucleotide excision repair pathway (the NER pathway) to initiate DNA repair. Also functions as a component of numerous distinct DCX (DDB1-CUL4-X-box) E3 ubiquitin-protein ligase complexes which mediate the ubiquitination and subsequent proteasomal degradation of target proteins. The functional specificity of the DCX E3 ubiquitin-protein ligase complex is determined by the variable substrate recognition component recruited by DDB1. May play a role in the regulation of the circadian clock. This is DNA damage-binding protein 1 (DDB1) from Gallus gallus (Chicken).